Here is a 1060-residue protein sequence, read N- to C-terminus: Histone lysine demethylase PHF8 (1060 aa).

The PHD-type zinc finger occupies 41–92; the sequence is PVYCLCRLPYDVTRFMIECDMCQDWFHGSCVGVEEEKAADIDLYHCPNCEVL. Ser69 is modified (phosphoserine; by CDK1). The disordered stretch occupies residues 100–120; the sequence is KRRGSSKGHDTHKGKPVKTGS. The linker stretch occupies residues 101 to 115; the sequence is RRGSSKGHDTHKGKP. Phosphoserine; by CDK1 is present on Ser120. Positions 231–387 constitute a JmjC domain; that stretch reads FSDTRLSNLV…MQLKAYEIEK (157 aa). Thr280 provides a ligand contact to substrate. Fe cation contacts are provided by His283 and Asp285. Lys300 is a substrate binding site. A Fe cation-binding site is contributed by His355. Residues 508–517 show a composition bias toward polar residues; that stretch reads AHSTSVSMSR. Residues 508–534 are disordered; sequence AHSTSVSMSRLSLPSKNGSKKKGLKPK. Ser651 carries the phosphoserine modification. Tyr704 is subject to Phosphotyrosine. 2 positions are modified to phosphothreonine: Thr705 and Thr706. Ser722 carries the phosphoserine modification. 3 disordered regions span residues 768–840, 852–902, and 915–1046; these read QSSS…EQDS, YPSL…GTRV, and KLAQ…KQRL. Low complexity-rich tracts occupy residues 769–778 and 785–804; these read SSSSSPATSS and GGQDRSSGSSSSGLGTVSNS. Ser804, Ser826, Ser834, Ser854, Ser857, and Ser880 each carry phosphoserine. The span at 826–839 shows a compositional bias: acidic residues; the sequence is SEEEEENASLDEQD. A compositionally biased stretch (basic and acidic residues) spans 891–900; the sequence is KQDRPVREGT. Over residues 924–934 the composition is skewed to basic residues; that stretch reads AQKKKYIKKKP. Positions 1018–1030 are enriched in polar residues; that stretch reads RRPSVGSQSNQAG.

It belongs to the JHDM1 histone demethylase family. JHDM1D subfamily. In terms of assembly, interacts with POLR1B, UBTF, SETD1A, HCFC1, E2F1 and ZNF711. Interacts with ZNF263; recruited to the SIX3 promoter along with other proteins involved in chromatin modification and transcriptional corepression where it contributes to transcriptional repression. Fe(2+) is required as a cofactor. Phosphorylation at Ser-69 and Ser-120 are required for dissociation from chromatin and accumulation of H4K20Me1 levels during prophase.

The protein localises to the nucleus. It is found in the nucleolus. The enzyme catalyses N(6),N(6)-dimethyl-L-lysyl(36)-[histone H3] + 2 2-oxoglutarate + 2 O2 = L-lysyl(36)-[histone H3] + 2 formaldehyde + 2 succinate + 2 CO2. The catalysed reaction is N(6),N(6)-dimethyl-L-lysyl(9)-[histone H3] + 2 2-oxoglutarate + 2 O2 = L-lysyl(9)-[histone H3] + 2 formaldehyde + 2 succinate + 2 CO2. In terms of biological role, histone lysine demethylase with selectivity for the di- and monomethyl states that plays a key role cell cycle progression, rDNA transcription and brain development. Demethylates mono- and dimethylated histone H3 'Lys-9' residue (H3K9Me1 and H3K9Me2), dimethylated H3 'Lys-27' (H3K27Me2) and monomethylated histone H4 'Lys-20' residue (H4K20Me1). Acts as a transcription activator as H3K9Me1, H3K9Me2, H3K27Me2 and H4K20Me1 are epigenetic repressive marks. Involved in cell cycle progression by being required to control G1-S transition. Acts as a coactivator of rDNA transcription, by activating polymerase I (pol I) mediated transcription of rRNA genes. Required for brain development, probably by regulating expression of neuron-specific genes. Only has activity toward H4K20Me1 when nucleosome is used as a substrate and when not histone octamer is used as substrate. May also have weak activity toward dimethylated H3 'Lys-36' (H3K36Me2), however, the relevance of this result remains unsure in vivo. Specifically binds trimethylated 'Lys-4' of histone H3 (H3K4me3), affecting histone demethylase specificity: has weak activity toward H3K9Me2 in absence of H3K4me3, while it has high activity toward H3K9me2 when binding H3K4me3. Positively modulates transcription of histone demethylase KDM5C, acting synergistically with transcription factor ARX; synergy may be related to enrichment of histone H3K4me3 in regulatory elements. The polypeptide is Histone lysine demethylase PHF8 (PHF8) (Homo sapiens (Human)).